Reading from the N-terminus, the 296-residue chain is Dof zinc finger protein DOF3.7 (296 aa).

Positions 41-69 are disordered; the sequence is NTRPNATASNGGSGGNTNNTATMETRKAR. Residues 45 to 62 are compositionally biased toward low complexity; it reads NATASNGGSGGNTNNTAT. A Dof-type zinc finger spans residues 74–128; the sequence is VNCPRCNSTNTKFCYYNNYSLTQPRYFCKGCRRYWTEGGSLRNVPVGGSSRKNKR. Zn(2+) contacts are provided by Cys-76, Cys-79, Cys-101, and Cys-104. Residues 115–146 form a disordered region; that stretch reads RNVPVGGSSRKNKRSSTPLASPSNPKLPDLNP. Over residues 129 to 138 the composition is skewed to polar residues; sequence SSTPLASPSN.

In terms of tissue distribution, expressed in the phloem of the mother plant, including in roots, stem, leaves and flowers, but not present in the seed and embryo. In maturing siliques, found all through the funiculus connecting the placenta to the ovule, but not in the ovule.

Its subcellular location is the nucleus. Its function is as follows. Transcription factor specifically involved in the maternal control of seed germination. Regulates transcription by binding to a 5'-AA[AG]G-3' consensus core sequence. May ensure the inactivity of a component that would be activated to trigger germination as a consequence of red light perception. The polypeptide is Dof zinc finger protein DOF3.7 (DOF3.7) (Arabidopsis thaliana (Mouse-ear cress)).